Consider the following 413-residue polypeptide: Serine hydroxymethyltransferase (413 aa).

(6S)-5,6,7,8-tetrahydrofolate is bound by residues Leu-117 and 121-123; that span reads GHL. Lys-226 is subject to N6-(pyridoxal phosphate)lysine. A (6S)-5,6,7,8-tetrahydrofolate-binding site is contributed by 349-351; the sequence is SPF.

The protein belongs to the SHMT family. Homodimer. The cofactor is pyridoxal 5'-phosphate.

It localises to the cytoplasm. The catalysed reaction is (6R)-5,10-methylene-5,6,7,8-tetrahydrofolate + glycine + H2O = (6S)-5,6,7,8-tetrahydrofolate + L-serine. Its pathway is one-carbon metabolism; tetrahydrofolate interconversion. The protein operates within amino-acid biosynthesis; glycine biosynthesis; glycine from L-serine: step 1/1. In terms of biological role, catalyzes the reversible interconversion of serine and glycine with tetrahydrofolate (THF) serving as the one-carbon carrier. This reaction serves as the major source of one-carbon groups required for the biosynthesis of purines, thymidylate, methionine, and other important biomolecules. Also exhibits THF-independent aldolase activity toward beta-hydroxyamino acids, producing glycine and aldehydes, via a retro-aldol mechanism. This Listeria welshimeri serovar 6b (strain ATCC 35897 / DSM 20650 / CCUG 15529 / CIP 8149 / NCTC 11857 / SLCC 5334 / V8) protein is Serine hydroxymethyltransferase.